Reading from the N-terminus, the 170-residue chain is uncharacterized protein (170 aa).

The stretch at 15–81 (EAFDEKAEKE…EREKSKSAVS (67 aa)) forms a coiled coil. Basic and acidic residues predominate over residues 20-77 (KAEKEKVEKEKALKEKTEKEKAEKEKAEKEKVEKEKAEKEKAAKEKAAKEKAEREKSK). Residues 20 to 95 (KAEKEKVEKE…NQNSNKGNVE (76 aa)) are disordered. Polar residues predominate over residues 78-92 (SAVSPATTNQNSNKG). Residues 98-118 (VAIGVLAGGAVTGVAVGGAYL) traverse the membrane as a helical segment.

Its subcellular location is the membrane. This is an uncharacterized protein from Dictyostelium discoideum (Social amoeba).